A 185-amino-acid chain; its full sequence is Ribosome-recycling factor (185 aa).

The protein belongs to the RRF family.

Its subcellular location is the cytoplasm. Functionally, responsible for the release of ribosomes from messenger RNA at the termination of protein biosynthesis. May increase the efficiency of translation by recycling ribosomes from one round of translation to another. In Myxococcus xanthus (strain DK1622), this protein is Ribosome-recycling factor.